The sequence spans 158 residues: Large ribosomal subunit protein uL16 (158 aa).

This sequence belongs to the universal ribosomal protein uL16 family. As to quaternary structure, part of the 50S ribosomal subunit.

Binds 23S rRNA and is also seen to make contacts with the A and possibly P site tRNAs. The sequence is that of Large ribosomal subunit protein uL16 from Prochlorococcus marinus (strain MIT 9313).